Here is an 85-residue protein sequence, read N- to C-terminus: Toxin BmKAEP (85 aa).

Positions 1–21 are cleaved as a signal peptide; it reads MKLFLLLVISASMLIDGLVNA. In terms of domain architecture, LCN-type CS-alpha/beta spans 22–82; it reads DGYIRGSNGC…TWKSESNTCG (61 aa). 4 disulfide bridges follow: cysteine 31–cysteine 81, cysteine 35–cysteine 56, cysteine 42–cysteine 63, and cysteine 46–cysteine 65. Glycine 82 bears the Glycine amide mark.

In terms of tissue distribution, expressed by the venom gland.

The protein localises to the secreted. Its function is as follows. Shows anti-epileptic activity. Shares high homology with depressant insect toxins, but shows very weak toxicity against mammals and insects and no obvious symptoms on insect larvae. May target voltage-gated sodium channel (Nav). The sequence is that of Toxin BmKAEP from Olivierus martensii (Manchurian scorpion).